We begin with the raw amino-acid sequence, 140 residues long: Large ribosomal subunit protein uL11 (140 aa).

It belongs to the universal ribosomal protein uL11 family. Part of the ribosomal stalk of the 50S ribosomal subunit. Interacts with L10 and the large rRNA to form the base of the stalk. L10 forms an elongated spine to which L12 dimers bind in a sequential fashion forming a multimeric L10(L12)X complex. In terms of processing, one or more lysine residues are methylated.

In terms of biological role, forms part of the ribosomal stalk which helps the ribosome interact with GTP-bound translation factors. This chain is Large ribosomal subunit protein uL11, found in Thermoanaerobacter pseudethanolicus (strain ATCC 33223 / 39E) (Clostridium thermohydrosulfuricum).